A 605-amino-acid chain; its full sequence is Adaptin medium chain homolog APM2 (605 aa).

Positions 150–196 (EEWSPGEESSSSSGSDSDSEYSNTNKRKDKKKKRKKKKGTKGKSVGK) are disordered. A compositionally biased stretch (low complexity) spans 155–171 (GEESSSSSGSDSDSEYS). A compositionally biased stretch (basic residues) spans 174-196 (NKRKDKKKKRKKKKGTKGKSVGK). The MHD domain maps to 269–604 (KNEFFLDVIE…TVSDEEYAYI (336 aa)).

Belongs to the adaptor complexes medium subunit family. As to quaternary structure, component of the AP-1R complex composed of at least APM2, APL4 and APS1. Interacts with MIL1. Interacts with APL2.

It is found in the golgi apparatus membrane. It localises to the early endosome membrane. The protein localises to the cytoplasmic vesicle. The protein resides in the clathrin-coated vesicle membrane. Functionally, component of the AP-1-related (AP-1R) complex, an adapter protein complex that mediates of cargo protein sorting in clathrin-coated vesicles. AP-1R has a specific role in SNARE SNC1 sorting. In contrast to the APM1-containing AP-1 complex, AP-1R is incapable of sorting CHS3. This is Adaptin medium chain homolog APM2 (APM2) from Saccharomyces cerevisiae (strain ATCC 204508 / S288c) (Baker's yeast).